Reading from the N-terminus, the 28-residue chain is uORF1 protein (28 aa).

It is found in the host cytoplasm. Its subcellular location is the host cytoskeleton. In terms of biological role, plays a role in the reorganization of host microtubules and intermediate filaments to form a cytoskeletal cage that surrounds the viral factories, protecting the site of viral replication. May play a role in viral infection of human cortical neurons. The polypeptide is uORF1 protein (Zika virus (isolate ZIKV/Human/French Polynesia/10087PF/2013) (ZIKV)).